A 359-amino-acid polypeptide reads, in one-letter code: Putative nucleotidyltransferase MAB21L1 (359 aa).

Residues 23 to 24 (RK) and 63 to 66 (YEGL) each bind a ribonucleoside 5'-triphosphate. Mg(2+)-binding residues include E73 and E75. A ribonucleoside 5'-triphosphate is bound by residues K248 and 252–255 (SLLK).

It belongs to the mab-21 family. Monomer. Homodecamer; composed of 2 back to back homopentamers. The protein may exist as monomer in solution and oiligomerizes upon ligand binding.

The protein localises to the nucleus. Putative nucleotidyltransferase required for several aspects of embryonic development including normal development of the eye. It is unclear whether it displays nucleotidyltransferase activity in vivo. Binds single-stranded RNA (ssRNA). The sequence is that of Putative nucleotidyltransferase MAB21L1 (mab21l1) from Xenopus laevis (African clawed frog).